We begin with the raw amino-acid sequence, 842 residues long: Putative G-type lectin S-receptor-like serine/threonine-protein kinase At1g61610 (842 aa).

Residues 1-22 (MAGFNRNLTLVTTLLIFHQLCS) form the signal peptide. N7, N23, N35, N60, N110, N123, N304, N351, and N380 each carry an N-linked (GlcNAc...) asparagine glycan. Topologically, residues 23–443 (NVSCSTSNSF…KLGGGKENST (421 aa)) are extracellular. The Bulb-type lectin domain maps to 29–150 (SNSFTRNHTI…SDRRKWYWES (122 aa)). Residues 292-331 (PSTECEKYNRCGNYSVCDDSKEFDSGKCSCIDGFEPVHQD) form the EGF-like domain. Intrachain disulfides connect C296–C308 and C302–C319. Positions 350–431 (CNQSLVAGQE…GGNSINIRLA (82 aa)) constitute a PAN domain. Disulfide bonds link C385–C406 and C389–C395. N-linked (GlcNAc...) asparagine glycosylation occurs at N441. The helical transmembrane segment at 444–464 (LWIIVFSVIGAFLLGLCIWIL) threads the bilayer. Topologically, residues 465-842 (WKFKKSLKAF…DVTFTTIVGR (378 aa)) are cytoplasmic. The 290-residue stretch at 525 to 814 (FAEENKLGQG…PRQPTFHSFL (290 aa)) folds into the Protein kinase domain. Residues 531-539 (LGQGGFGTV) and K553 each bind ATP. Phosphoserine is present on S559. The segment at 614 to 631 (SKQGSLDWRKRWEVIGGI) is caM-binding. Residue D650 is the Proton acceptor of the active site. S654 and S667 each carry phosphoserine. T684 is subject to Phosphothreonine. Phosphoserine occurs at positions 728 and 830. T837 is subject to Phosphothreonine.

The protein belongs to the protein kinase superfamily. Ser/Thr protein kinase family.

Its subcellular location is the cell membrane. The enzyme catalyses L-seryl-[protein] + ATP = O-phospho-L-seryl-[protein] + ADP + H(+). The catalysed reaction is L-threonyl-[protein] + ATP = O-phospho-L-threonyl-[protein] + ADP + H(+). The protein is Putative G-type lectin S-receptor-like serine/threonine-protein kinase At1g61610 of Arabidopsis thaliana (Mouse-ear cress).